Consider the following 348-residue polypeptide: Eukaryotic translation initiation factor 3 subunit I (348 aa).

WD repeat units follow at residues 8–49 (GHER…GTFE), 51–91 (HMGT…YTYE), 93–135 (PTPV…PKNQ), 147–186 (DGAK…FIDS), 196–238 (EKIH…KVYK), and 294–333 (GHFG…YDFE).

The protein belongs to the eIF-3 subunit I family. Component of the eukaryotic translation initiation factor 3 (eIF-3) complex.

It is found in the cytoplasm. In terms of biological role, component of the eukaryotic translation initiation factor 3 (eIF-3) complex, which is involved in protein synthesis of a specialized repertoire of mRNAs and, together with other initiation factors, stimulates binding of mRNA and methionyl-tRNAi to the 40S ribosome. The eIF-3 complex specifically targets and initiates translation of a subset of mRNAs involved in cell proliferation. The sequence is that of Eukaryotic translation initiation factor 3 subunit I from Meyerozyma guilliermondii (strain ATCC 6260 / CBS 566 / DSM 6381 / JCM 1539 / NBRC 10279 / NRRL Y-324) (Yeast).